Here is a 257-residue protein sequence, read N- to C-terminus: 3-alpha-hydroxysteroid dehydrogenase/carbonyl reductase (257 aa).

Residues 8–13 (GCATGI), D32, 41–42 (DL), and G71 contribute to the NAD(+) site. A substrate-binding site is contributed by S114. NAD(+) contacts are provided by Y155 and K159. The active-site Proton acceptor is the Y155.

Belongs to the short-chain dehydrogenases/reductases (SDR) family. In terms of assembly, homodimer.

The protein resides in the cytoplasm. It catalyses the reaction a 3alpha-hydroxysteroid + NADP(+) = a 3-oxosteroid + NADPH + H(+). It carries out the reaction a 3alpha-hydroxysteroid + NAD(+) = a 3-oxosteroid + NADH + H(+). Functionally, catalyzes the reversible interconversion of hydroxy and oxo groups at position 3 of the steroid nucleus. Along with the 3 alpha-hydroxysteroid dehydrogenase and 3-oxo-reductase activities towards a variety of cis or trans fused A/B ring steroids, it also reduces several xenobiotic carbonyl compounds, including a metyrapone-based class of insecticides, to the respective alcohol metabolites. No detectable activity on testosterone, progesterone or 3-oxo-desogestrel. The polypeptide is 3-alpha-hydroxysteroid dehydrogenase/carbonyl reductase (hsdA) (Comamonas testosteroni (Pseudomonas testosteroni)).